Reading from the N-terminus, the 310-residue chain is Tagatose-6-phosphate kinase (310 aa).

The protein belongs to the carbohydrate kinase PfkB family. LacC subfamily.

The enzyme catalyses D-tagatofuranose 6-phosphate + ATP = D-tagatofuranose 1,6-bisphosphate + ADP + H(+). The protein operates within carbohydrate metabolism; D-tagatose 6-phosphate degradation; D-glyceraldehyde 3-phosphate and glycerone phosphate from D-tagatose 6-phosphate: step 1/2. In Staphylococcus aureus (strain USA300 / TCH1516), this protein is Tagatose-6-phosphate kinase.